Here is a 233-residue protein sequence, read N- to C-terminus: Coenzyme Q-binding protein COQ10 homolog, mitochondrial (233 aa).

The N-terminal 34 residues, 1–34 (MAEKATSLFLRAMEISEKQSFDVMRRNSSCTIRH), are a transit peptide targeting the mitochondrion.

It belongs to the COQ10 family. As to quaternary structure, interacts with coenzyme Q.

Its subcellular location is the mitochondrion inner membrane. Required for the function of coenzyme Q in the respiratory chain. May serve as a chaperone or may be involved in the transport of Q6 from its site of synthesis to the catalytic sites of the respiratory complexes. This chain is Coenzyme Q-binding protein COQ10 homolog, mitochondrial, found in Danio rerio (Zebrafish).